The sequence spans 920 residues: Protein translocase subunit SecA (920 aa).

ATP contacts are provided by residues Gln85, 103–107 (GEGKT), and Asp514. Positions 904, 906, 915, and 916 each coordinate Zn(2+).

This sequence belongs to the SecA family. Monomer and homodimer. Part of the essential Sec protein translocation apparatus which comprises SecA, SecYEG and auxiliary proteins SecDF-YajC and YidC. The cofactor is Zn(2+).

Its subcellular location is the cell inner membrane. The protein resides in the cytoplasm. It carries out the reaction ATP + H2O + cellular proteinSide 1 = ADP + phosphate + cellular proteinSide 2.. Functionally, part of the Sec protein translocase complex. Interacts with the SecYEG preprotein conducting channel. Has a central role in coupling the hydrolysis of ATP to the transfer of proteins into and across the cell membrane, serving both as a receptor for the preprotein-SecB complex and as an ATP-driven molecular motor driving the stepwise translocation of polypeptide chains across the membrane. The sequence is that of Protein translocase subunit SecA from Janthinobacterium sp. (strain Marseille) (Minibacterium massiliensis).